The chain runs to 227 residues: Probable GTP-binding protein EngB (227 aa).

The EngB-type G domain occupies 13-188 (IGLEVAFAGR…AGVMGNWYEY (176 aa)). GTP-binding positions include 21–28 (GRSNAGKS), 48–52 (GRTQM), 67–70 (DLPG), 134–137 (TKAD), and 167–169 (FSA). Mg(2+)-binding residues include S28 and T50.

Belongs to the TRAFAC class TrmE-Era-EngA-EngB-Septin-like GTPase superfamily. EngB GTPase family. Mg(2+) is required as a cofactor.

In terms of biological role, necessary for normal cell division and for the maintenance of normal septation. This Psychrobacter cryohalolentis (strain ATCC BAA-1226 / DSM 17306 / VKM B-2378 / K5) protein is Probable GTP-binding protein EngB.